The chain runs to 146 residues: D-aminoacyl-tRNA deacylase (146 aa).

Residues 137–138 (GP) carry the Gly-cisPro motif, important for rejection of L-amino acids motif.

The protein belongs to the DTD family. Homodimer.

It is found in the cytoplasm. The catalysed reaction is glycyl-tRNA(Ala) + H2O = tRNA(Ala) + glycine + H(+). It catalyses the reaction a D-aminoacyl-tRNA + H2O = a tRNA + a D-alpha-amino acid + H(+). An aminoacyl-tRNA editing enzyme that deacylates mischarged D-aminoacyl-tRNAs. Also deacylates mischarged glycyl-tRNA(Ala), protecting cells against glycine mischarging by AlaRS. Acts via tRNA-based rather than protein-based catalysis; rejects L-amino acids rather than detecting D-amino acids in the active site. By recycling D-aminoacyl-tRNA to D-amino acids and free tRNA molecules, this enzyme counteracts the toxicity associated with the formation of D-aminoacyl-tRNA entities in vivo and helps enforce protein L-homochirality. This is D-aminoacyl-tRNA deacylase from Hahella chejuensis (strain KCTC 2396).